Consider the following 2199-residue polypeptide: DNA polymerase epsilon catalytic subunit A (2199 aa).

4 residues coordinate Zn(2+): cysteine 2069, cysteine 2072, cysteine 2104, and cysteine 2107. The CysA-type zinc finger occupies 2069-2107; the sequence is CKQCGVHQDFDLCLHEHLWPTRDDMGTLVFSDGWSCSSC. Cysteine 2138, cysteine 2141, cysteine 2153, and cysteine 2155 together coordinate [4Fe-4S] cluster. The CysB motif signature appears at 2138–2155; sequence CSKCKTVKQWSLKERCSC.

Belongs to the DNA polymerase type-B family. Heterotetramer. Consists of 4 subunits: pol2, dpb2, dpb3 and dpb4. [4Fe-4S] cluster is required as a cofactor.

The protein resides in the nucleus. It carries out the reaction DNA(n) + a 2'-deoxyribonucleoside 5'-triphosphate = DNA(n+1) + diphosphate. Its function is as follows. DNA polymerase II participates in chromosomal DNA replication. In Schizosaccharomyces pombe (strain 972 / ATCC 24843) (Fission yeast), this protein is DNA polymerase epsilon catalytic subunit A (pol2).